A 354-amino-acid polypeptide reads, in one-letter code: MRLLLRNYSLMEAVKRLLPRPRKKIYNLGACFELVDIPKISYNPSELSEPRFLEYSNLSDKLHLREAIDKILIPRVVGTTNHSIVREYIVQSLRDLDWDVEVNSFHDHAPIKGKLHFHNIIATLNPNAERYLVLSCHYDSKYMPGVEFLGATDSAVPCAMLLNLAQVLQEQLKPLKKSKLSLMLLFFDGEEAFEEWGPKDSIYGARHLAKKWHHEGKLDRIDMLVLLDLLGAPDPAFYSFFENTESWYMRIQSVETRLAKLQLLERYASSGVAQRDPTRYFQSQAMRSSFIEDDHIPFLRRNVPILHLIPVPFPSVWHTPDDNASVIDYATTDNLALIIRLFALEYLLAGTEAK.

The N-terminal 8 residues, 1–8, are a transit peptide targeting the mitochondrion; that stretch reads MRLLLRNY. A disulfide bridge connects residues Cys-136 and Cys-158. Residue Asp-153 coordinates Zn(2+). The Proton acceptor role is filled by Glu-190. Glu-191 provides a ligand contact to Zn(2+). The Proton acceptor role is filled by Asp-228. His-318 provides a ligand contact to Zn(2+).

This sequence belongs to the glutaminyl-peptide cyclotransferase family.

The protein resides in the secreted. The protein localises to the mitochondrion. The catalysed reaction is N-terminal L-glutaminyl-[peptide] = N-terminal 5-oxo-L-prolyl-[peptide] + NH4(+). With respect to regulation, inhibited by imidazoles (imidazole, benzimidazole, 1-benzylimidazole, 1-methylimidazole, P150/03 and N-omega-acetylhistamine) and cysteamines (cysteamine and N-dimethylcysteamine). Inhibited by PDB50 1(3,4-dimethoxyphenyl)-3-(3-imidazol-1-ylpropyl)thiourea. Acts as a glutaminyl-peptide cyclotransferase. Responsible for the biosynthesis of pyroglutamyl peptides. Might be more efficient in the conversion of tri and tetrapeptides in vitro. Might have a relative preference for substrates containing hydrophobic amino acids in vitro. This chain is Glutaminyl-peptide cyclotransferase, found in Drosophila melanogaster (Fruit fly).